A 129-amino-acid chain; its full sequence is UPF0148 protein APE_0207 (129 aa).

Belongs to the UPF0148 family.

This chain is UPF0148 protein APE_0207, found in Aeropyrum pernix (strain ATCC 700893 / DSM 11879 / JCM 9820 / NBRC 100138 / K1).